We begin with the raw amino-acid sequence, 460 residues long: A-type ATP synthase subunit B (460 aa).

This sequence belongs to the ATPase alpha/beta chains family. Has multiple subunits with at least A(3), B(3), C, D, E, F, H, I and proteolipid K(x).

It localises to the cell membrane. In terms of biological role, component of the A-type ATP synthase that produces ATP from ADP in the presence of a proton gradient across the membrane. The B chain is a regulatory subunit. This chain is A-type ATP synthase subunit B, found in Methanosarcina barkeri.